Reading from the N-terminus, the 424-residue chain is ATP synthase subunit beta, mitochondrial (424 aa).

The transit peptide at 1–60 (MFRLSSGLLKGGACASRSRIPQLGRSLYSTATSAGADKTQGKIHTVIGAVVDVQFNHGRL) directs the protein to the mitochondrion. ATP contacts are provided by residues 187 to 194 (GGAGVGKT), 188 to 195 (GAGVGKTV), 219 to 220 (ER), and Tyr-374.

Belongs to the ATPase alpha/beta chains family. In terms of assembly, F-type ATPases have 2 components, CF(1) - the catalytic core - and CF(0) - the membrane proton channel. CF(1) has five subunits: alpha(3), beta(3), gamma(1), delta(1), epsilon(1). CF(0) has three main subunits: a, b and c.

Its subcellular location is the mitochondrion. It is found in the mitochondrion inner membrane. It catalyses the reaction ATP + H2O + 4 H(+)(in) = ADP + phosphate + 5 H(+)(out). Its function is as follows. ATP synthase subunit beta; part of the gene cluster that mediates the biosynthesis of citreoviridin, an inhibitor of the of F1-ATPase beta-subunit. Mitochondrial membrane ATP synthase (F(1)F(0) ATP synthase or Complex V) produces ATP from ADP in the presence of a proton gradient across the membrane which is generated by electron transport complexes of the respiratory chain. Whereas ctvA to ctvD constitute the core biosynthetic gene cluster, ctvE acts as a self-resistance gene. This Aspergillus terreus (strain NIH 2624 / FGSC A1156) protein is ATP synthase subunit beta, mitochondrial.